Reading from the N-terminus, the 159-residue chain is Ribosomal RNA large subunit methyltransferase H (159 aa).

S-adenosyl-L-methionine is bound by residues L76, G108, and 127–132; that span reads FSKMTL.

The protein belongs to the RNA methyltransferase RlmH family. As to quaternary structure, homodimer.

The protein localises to the cytoplasm. The catalysed reaction is pseudouridine(1915) in 23S rRNA + S-adenosyl-L-methionine = N(3)-methylpseudouridine(1915) in 23S rRNA + S-adenosyl-L-homocysteine + H(+). Specifically methylates the pseudouridine at position 1915 (m3Psi1915) in 23S rRNA. In Bacillus cereus (strain ATCC 14579 / DSM 31 / CCUG 7414 / JCM 2152 / NBRC 15305 / NCIMB 9373 / NCTC 2599 / NRRL B-3711), this protein is Ribosomal RNA large subunit methyltransferase H.